The following is a 158-amino-acid chain: Cysteine proteinase inhibitor 4 (158 aa).

Residues 1-24 (MAARCPVGVASVLLLIVLVTVASA) form the signal peptide. A disordered region spans residues 26 to 51 (SGARSGGGGGGGIRELRGGGAGRRVG). The segment covering 29–49 (RSGGGGGGGIRELRGGGAGRR) has biased composition (gly residues). The 66-residue stretch at 51–116 (GGRTEVRDVE…KYYLRVAAAE (66 aa)) folds into the Cystatin domain. The short motif at 101-105 (QVVSG) is the Secondary area of contact element.

It belongs to the cystatin family. Phytocystatin subfamily.

Its subcellular location is the secreted. Its function is as follows. Specific inhibitor of cysteine proteinases. Probably involved in the regulation of endogenous processes and in defense against pests and pathogens. This is Cysteine proteinase inhibitor 4 from Oryza sativa subsp. japonica (Rice).